Consider the following 405-residue polypeptide: Acetate kinase (405 aa).

Asn-7 serves as a coordination point for Mg(2+). Lys-14 serves as a coordination point for ATP. A substrate-binding site is contributed by Arg-98. Asp-155 (proton donor/acceptor) is an active-site residue. ATP contacts are provided by residues 215–219 (HLGNG), 289–291 (DMR), and 337–341 (GIGEN). A Mg(2+)-binding site is contributed by Glu-391.

Belongs to the acetokinase family. Homodimer. The cofactor is Mg(2+). Mn(2+) is required as a cofactor.

Its subcellular location is the cytoplasm. The catalysed reaction is acetate + ATP = acetyl phosphate + ADP. Its pathway is metabolic intermediate biosynthesis; acetyl-CoA biosynthesis; acetyl-CoA from acetate: step 1/2. Catalyzes the formation of acetyl phosphate from acetate and ATP. Can also catalyze the reverse reaction. This Desulfotalea psychrophila (strain LSv54 / DSM 12343) protein is Acetate kinase.